Here is a 384-residue protein sequence, read N- to C-terminus: NADH-quinone oxidoreductase subunit D 2 (384 aa).

Belongs to the complex I 49 kDa subunit family. As to quaternary structure, NDH-1 is composed of 14 different subunits. Subunits NuoB, C, D, E, F, and G constitute the peripheral sector of the complex.

The protein localises to the cell membrane. The catalysed reaction is a quinone + NADH + 5 H(+)(in) = a quinol + NAD(+) + 4 H(+)(out). Functionally, NDH-1 shuttles electrons from NADH, via FMN and iron-sulfur (Fe-S) centers, to quinones in the respiratory chain. The immediate electron acceptor for the enzyme in this species is believed to be a menaquinone. Couples the redox reaction to proton translocation (for every two electrons transferred, four hydrogen ions are translocated across the cytoplasmic membrane), and thus conserves the redox energy in a proton gradient. In Symbiobacterium thermophilum (strain DSM 24528 / JCM 14929 / IAM 14863 / T), this protein is NADH-quinone oxidoreductase subunit D 2.